A 398-amino-acid chain; its full sequence is Elongation factor Tu (398 aa).

The tr-type G domain maps to 10–208; it reads KPHVNVGTIG…ALDSHIPEPT (199 aa). The tract at residues 19 to 26 is G1; it reads GHIDHGKT. GTP is bound at residue 19–26; it reads GHIDHGKT. T26 is a Mg(2+) binding site. Residues 60–64 form a G2 region; the sequence is TKTVT. The segment at 83–86 is G3; it reads DCPG. GTP is bound by residues 83–87 and 138–141; these read DCPGH and NKCD. Residues 138 to 141 are G4; sequence NKCD. Residues 176-178 form a G5 region; the sequence is SSL.

Belongs to the TRAFAC class translation factor GTPase superfamily. Classic translation factor GTPase family. EF-Tu/EF-1A subfamily. Monomer.

The protein resides in the cytoplasm. The catalysed reaction is GTP + H2O = GDP + phosphate + H(+). GTP hydrolase that promotes the GTP-dependent binding of aminoacyl-tRNA to the A-site of ribosomes during protein biosynthesis. The polypeptide is Elongation factor Tu (Rhodopirellula baltica (strain DSM 10527 / NCIMB 13988 / SH1)).